A 321-amino-acid polypeptide reads, in one-letter code: Beta-ketoacyl-[acyl-carrier-protein] synthase III (321 aa).

Residues C114 and H248 contribute to the active site. The tract at residues 249-253 (QANIR) is ACP-binding. N278 is a catalytic residue.

Belongs to the thiolase-like superfamily. FabH family. In terms of assembly, homodimer.

Its subcellular location is the cytoplasm. The enzyme catalyses malonyl-[ACP] + acetyl-CoA + H(+) = 3-oxobutanoyl-[ACP] + CO2 + CoA. The protein operates within lipid metabolism; fatty acid biosynthesis. Functionally, catalyzes the condensation reaction of fatty acid synthesis by the addition to an acyl acceptor of two carbons from malonyl-ACP. Catalyzes the first condensation reaction which initiates fatty acid synthesis and may therefore play a role in governing the total rate of fatty acid production. Possesses both acetoacetyl-ACP synthase and acetyl transacylase activities. Its substrate specificity determines the biosynthesis of branched-chain and/or straight-chain of fatty acids. In Methylococcus capsulatus (strain ATCC 33009 / NCIMB 11132 / Bath), this protein is Beta-ketoacyl-[acyl-carrier-protein] synthase III.